Reading from the N-terminus, the 2615-residue chain is Collagen alpha-5(VI) chain (2615 aa).

A signal peptide spans 1–18; it reads MKILLIIFVLIIWTETLA. The segment at 19–1394 is nonhelical region; sequence DQSPGPGPVY…TCCCTFCKCP (1376 aa). VWFA domains are found at residues 30–209, 236–413, 442–612, 628–797, 814–987, 1005–1178, and 1194–1376; these read DVVF…IKDV, DLVF…LKKL, DIHF…KNEV, DIMF…ERKL, DVVF…FTLV, DVIF…KKRI, and DIVV…KLSQ. N-linked (GlcNAc...) asparagine glycosylation is found at N201 and N260. N835 carries N-linked (GlcNAc...) asparagine glycosylation. 6 Collagen-like domains span residues 1395–1446, 1434–1490, 1464–1520, 1524–1580, 1579–1629, and 1674–1729; these read GIPG…GCPG, GPQG…KGDP, GDDG…PGQN, KGQK…TLGA, GAEG…LGKK, and GDAG…MAGQ. Positions 1395–1728 are triple-helical region; the sequence is GIPGPHGTRG…GQRGIKGMAG (334 aa). A disordered region spans residues 1404 to 1693; it reads GLQAMKGSQG…NPGIPGGPGP (290 aa). Positions 1430 to 1432 match the Cell attachment site motif; it reads RGD. A compositionally biased stretch (low complexity) spans 1511 to 1522; that stretch reads PGDPGNPGQNNN. Low complexity-rich tracts occupy residues 1601–1611 and 1622–1641; these read SQGQKGPQGSP and RPGL…LGPV. The nonhelical region stretch occupies residues 1729 to 2615; sequence QPVYSQCDLI…EDKEMEATDI (887 aa). VWFA domains are found at residues 1758 to 1965, 1963 to 2154, and 2291 to 2487; these read ELVF…MDVV, DVVF…AKFL, and DVAF…VKPF. The N-linked (GlcNAc...) asparagine glycan is linked to N2509.

Belongs to the type VI collagen family. In terms of assembly, trimers composed of three different chains: alpha-1(VI), alpha-2(VI), and alpha-3(VI) or alpha-5(VI) or alpha-6(VI). In terms of processing, prolines at the third position of the tripeptide repeating unit (G-X-Y) are hydroxylated in some or all of the chains. Expressed in skin, followed by lung, small intestine, colon and testis. In skin, it is expressed in the epidermis with strongest staining in suprabasal viable layers. In ATOD patients, it is absent in the most differentiated upper spinous and granular layers (at protein level).

The protein localises to the secreted. It is found in the extracellular space. It localises to the extracellular matrix. Collagen VI acts as a cell-binding protein. The chain is Collagen alpha-5(VI) chain (COL6A5) from Homo sapiens (Human).